A 101-amino-acid chain; its full sequence is Biogenesis of lysosome-related organelles complex 1 subunit SNN1 (101 aa).

The stretch at D62–S100 forms a coiled coil.

It belongs to the SNAPIN family. In terms of assembly, component of the biogenesis of lysosome-related organelles complex-1 (BLOC-1).

The protein resides in the endosome. Its function is as follows. Component of the biogenesis of lysosome-related organelles complex-1 (BLOC-1), a complex involved in endosomal cargo sorting. This Candida glabrata (strain ATCC 2001 / BCRC 20586 / JCM 3761 / NBRC 0622 / NRRL Y-65 / CBS 138) (Yeast) protein is Biogenesis of lysosome-related organelles complex 1 subunit SNN1 (SNN1).